The primary structure comprises 757 residues: Xylosyl- and glucuronyltransferase LARGE1 (757 aa).

Topologically, residues 1–10 (MLGMCRGRRK) are cytoplasmic. Residues 11 to 31 (FVAASLALIFIPALTWLYLSS) traverse the membrane as a helical; Signal-anchor for type II membrane protein segment. Topologically, residues 32–757 (ANITVKPLPL…LKYMTVDNNS (726 aa)) are lumenal. Residues 50–82 (AVVGAAAEHQSLELRLRDVEEHNNALRREISRT) adopt a coiled-coil conformation. Positions 76-127 (RREISRTPRVPTHSSHPSSSRHGNQLHTHSTEEGTGDSEAKKGAAAGNSSDC) are disordered. Low complexity predominate over residues 82-97 (TPRVPTHSSHPSSSRH). Residues Asn-123 and Asn-149 are each glycosylated (N-linked (GlcNAc...) asparagine). The segment at 139 to 414 (IHIAIVCAGY…FLEYDGNLLR (276 aa)) is xylosyltransferase activity. Residues Asp-243 and Asp-245 each coordinate Mn(2+). The N-linked (GlcNAc...) asparagine glycan is linked to Asn-273. A glucuronyltransferase activity region spans residues 415-757 (RELFGCPSET…LKYMTVDNNS (343 aa)). Asp-564 and Asp-566 together coordinate Mn(2+). A glycan (N-linked (GlcNAc...) asparagine) is linked at Asn-738.

In the C-terminal section; belongs to the glycosyltransferase 49 family. This sequence in the N-terminal section; belongs to the glycosyltransferase 8 family. The cofactor is Mn(2+).

Its subcellular location is the golgi apparatus membrane. It catalyses the reaction 3-O-[beta-D-GlcA-(1-&gt;3)-beta-D-Xyl-(1-&gt;4)-Rib-ol-P-Rib-ol-P-3-beta-D-GalNAc-(1-&gt;3)-beta-D-GlcNAc-(1-&gt;4)-(O-6-P-alpha-D-Man)]-Thr-[protein] + UDP-alpha-D-xylose = 3-O-[alpha-D-Xyl-(1-&gt;3)-beta-D-GlcA-(1-&gt;4)-beta-D-Xyl-(1-&gt;4)-Rib-ol-P-Rib-ol-P-3-beta-D-GalNAc-(1-&gt;3)-beta-D-GlcNAc-(1-&gt;4)-(O-6-P-alpha-D-Man)]-Thr-[protein] + UDP + H(+). It carries out the reaction 3-O-{(1-&gt;[3)-alpha-D-Xyl-(1-&gt;3)-beta-D-GlcA-(1-&gt;](n)-4)-beta-D-Xyl-(1-&gt;4)-Rib-ol-P-Rib-ol-P-3-beta-D-GalNAc-(1-&gt;3)-beta-D-GlcNAc-(1-&gt;4)-O-6-P-alpha-D-Man}-L-Thr-[protein] + UDP-alpha-D-glucuronate = 3-O-{beta-D-GlcA-(1-&gt;[3)-alpha-D-Xyl-(1-&gt;3)-beta-D-GlcA-(1-&gt;](n)-4)-beta-D-Xyl-(1-&gt;4)-Rib-ol-P-Rib-ol-P-3-beta-D-GalNAc-(1-&gt;3)-beta-D-GlcNAc-(1-&gt;4)-O-6-P-alpha-D-Man}-L-Thr-[protein] + UDP + H(+). The enzyme catalyses 3-O-{beta-D-GlcA-(1-&gt;[3)-alpha-D-Xyl-(1-&gt;3)-beta-D-GlcA-(1-&gt;](n)-4)-beta-D-Xyl-(1-&gt;4)-Rib-ol-P-Rib-ol-P-3-beta-D-GalNAc-(1-&gt;3)-beta-D-GlcNAc-(1-&gt;4)-O-6-P-alpha-D-Man}-L-Thr-[protein] + UDP-alpha-D-xylose = 3-O-{(1-&gt;[3)-alpha-D-Xyl-(1-&gt;3)-beta-D-GlcA-(1-&gt;](n+1)-4)-beta-D-Xyl-(1-&gt;4)-Rib-ol-P-Rib-ol-P-3-beta-D-GalNAc-(1-&gt;3)-beta-D-GlcNAc-(1-&gt;4)-O-6-P-alpha-D-Man}-L-Thr-[protein] + UDP + H(+). The protein operates within protein modification; protein glycosylation. Bifunctional glycosyltransferase with both alpha-1,3-xylosyltransferase and beta-1,3-glucuronyltransferase activities involved in the maturation of alpha-dystroglycan (DAG1) by glycosylation leading to DAG1 binding to laminin G-like domain-containing extracellular proteins with high affinity. Elongates the glucuronyl-beta-1,4-xylose-beta disaccharide primer structure initiated by B4GAT1 by adding repeating units [-3-Xylose-alpha-1,3-GlcA-beta-1-] to produce a heteropolysaccharide. Requires the phosphorylation of core M3 (O-mannosyl trisaccharide) by POMK to elongate the glucuronyl-beta-1,4-xylose-beta disaccharide primer. Plays a key role in skeletal muscle function and regeneration. This is Xylosyl- and glucuronyltransferase LARGE1 from Danio rerio (Zebrafish).